Consider the following 224-residue polypeptide: uncharacterized protein (224 aa).

This sequence to M.tuberculosis Rv2558.

This is an uncharacterized protein from Mycobacterium tuberculosis (strain CDC 1551 / Oshkosh).